Reading from the N-terminus, the 123-residue chain is Small ribosomal subunit protein uS12 (123 aa).

The residue at position 89 (aspartate 89) is a 3-methylthioaspartic acid. The tract at residues 100 to 123 (GSLDTSGVKDRKQGRSKYGAKRPK) is disordered. The segment covering 113-123 (GRSKYGAKRPK) has biased composition (basic residues).

The protein belongs to the universal ribosomal protein uS12 family. In terms of assembly, part of the 30S ribosomal subunit. Contacts proteins S8 and S17. May interact with IF1 in the 30S initiation complex.

In terms of biological role, with S4 and S5 plays an important role in translational accuracy. Its function is as follows. Interacts with and stabilizes bases of the 16S rRNA that are involved in tRNA selection in the A site and with the mRNA backbone. Located at the interface of the 30S and 50S subunits, it traverses the body of the 30S subunit contacting proteins on the other side and probably holding the rRNA structure together. The combined cluster of proteins S8, S12 and S17 appears to hold together the shoulder and platform of the 30S subunit. The protein is Small ribosomal subunit protein uS12 of Pseudomonas aeruginosa (strain LESB58).